Consider the following 278-residue polypeptide: Large ribosomal subunit protein uL2 (278 aa).

Disordered stretches follow at residues 33 to 53 and 219 to 278; these read LTEG…TSRG and LTRG…KKKR. Residues 269–278 show a composition bias toward basic residues; it reads IRSRHAKKKR.

This sequence belongs to the universal ribosomal protein uL2 family. In terms of assembly, part of the 50S ribosomal subunit. Forms a bridge to the 30S subunit in the 70S ribosome.

One of the primary rRNA binding proteins. Required for association of the 30S and 50S subunits to form the 70S ribosome, for tRNA binding and peptide bond formation. It has been suggested to have peptidyltransferase activity; this is somewhat controversial. Makes several contacts with the 16S rRNA in the 70S ribosome. The sequence is that of Large ribosomal subunit protein uL2 from Sphingopyxis alaskensis (strain DSM 13593 / LMG 18877 / RB2256) (Sphingomonas alaskensis).